Here is a 214-residue protein sequence, read N- to C-terminus: Pyridoxine/pyridoxamine 5'-phosphate oxidase (214 aa).

Residues 8 to 11 and Lys66 each bind substrate; that span reads RINY. FMN is bound by residues 61 to 66, 76 to 77, Arg82, Lys83, and Gln105; these read RIVLIK and FT. The substrate site is built by Tyr123, Arg127, and Ser131. Residues 140–141 and Trp184 each bind FMN; that span reads QS. 190 to 192 serves as a coordination point for substrate; sequence RLH. An FMN-binding site is contributed by Arg194.

This sequence belongs to the pyridoxamine 5'-phosphate oxidase family. As to quaternary structure, homodimer. It depends on FMN as a cofactor.

The catalysed reaction is pyridoxamine 5'-phosphate + O2 + H2O = pyridoxal 5'-phosphate + H2O2 + NH4(+). The enzyme catalyses pyridoxine 5'-phosphate + O2 = pyridoxal 5'-phosphate + H2O2. It functions in the pathway cofactor metabolism; pyridoxal 5'-phosphate salvage; pyridoxal 5'-phosphate from pyridoxamine 5'-phosphate: step 1/1. It participates in cofactor metabolism; pyridoxal 5'-phosphate salvage; pyridoxal 5'-phosphate from pyridoxine 5'-phosphate: step 1/1. In terms of biological role, catalyzes the oxidation of either pyridoxine 5'-phosphate (PNP) or pyridoxamine 5'-phosphate (PMP) into pyridoxal 5'-phosphate (PLP). This chain is Pyridoxine/pyridoxamine 5'-phosphate oxidase, found in Burkholderia cenocepacia (strain HI2424).